The chain runs to 176 residues: uncharacterized protein (176 aa).

This is an uncharacterized protein from Methanocaldococcus jannaschii (strain ATCC 43067 / DSM 2661 / JAL-1 / JCM 10045 / NBRC 100440) (Methanococcus jannaschii).